A 379-amino-acid chain; its full sequence is Queuine tRNA-ribosyltransferase (379 aa).

Asp94 acts as the Proton acceptor in catalysis. Substrate-binding positions include 94–98 (DSGGF), Asp148, Gln191, and Gly218. Positions 249 to 255 (GVGSPDS) are RNA binding. The active-site Nucleophile is the Asp268. The interval 273 to 277 (TRIGR) is RNA binding; important for wobble base 34 recognition. Zn(2+)-binding residues include Cys306, Cys308, Cys311, and His337.

Belongs to the queuine tRNA-ribosyltransferase family. Homodimer. Within each dimer, one monomer is responsible for RNA recognition and catalysis, while the other monomer binds to the replacement base PreQ1. It depends on Zn(2+) as a cofactor.

It catalyses the reaction 7-aminomethyl-7-carbaguanine + guanosine(34) in tRNA = 7-aminomethyl-7-carbaguanosine(34) in tRNA + guanine. It functions in the pathway tRNA modification; tRNA-queuosine biosynthesis. Functionally, catalyzes the base-exchange of a guanine (G) residue with the queuine precursor 7-aminomethyl-7-deazaguanine (PreQ1) at position 34 (anticodon wobble position) in tRNAs with GU(N) anticodons (tRNA-Asp, -Asn, -His and -Tyr). Catalysis occurs through a double-displacement mechanism. The nucleophile active site attacks the C1' of nucleotide 34 to detach the guanine base from the RNA, forming a covalent enzyme-RNA intermediate. The proton acceptor active site deprotonates the incoming PreQ1, allowing a nucleophilic attack on the C1' of the ribose to form the product. After dissociation, two additional enzymatic reactions on the tRNA convert PreQ1 to queuine (Q), resulting in the hypermodified nucleoside queuosine (7-(((4,5-cis-dihydroxy-2-cyclopenten-1-yl)amino)methyl)-7-deazaguanosine). This is Queuine tRNA-ribosyltransferase from Anoxybacillus flavithermus (strain DSM 21510 / WK1).